The primary structure comprises 239 residues: uncharacterized protein (239 aa).

An S4 RNA-binding domain is found at 1-65 (MRLDKLLANS…DYREFIYLMM (65 aa)). The active-site Nucleophile is Asp-103.

The protein belongs to the pseudouridine synthase RsuA family.

It carries out the reaction a uridine in RNA = a pseudouridine in RNA. This is an uncharacterized protein from Bacillus subtilis (strain 168).